We begin with the raw amino-acid sequence, 329 residues long: MTDSAYRVDTISRLAQWRIHNLSSSTYRKSDPFKMGLWNWHLSVEKSKMLLNVKLYPEVSNLTRENPPVASFALRVVSSTGERKALSHPEVIDKRIKTNEDFIWTIEVPLTGKIIIDVEFLDLKVLSQDSGELYSIWANGSTENQSQVTAVTSLGRMLTESIYTDITINASDGSIGAHRAVLAARSPVFRSMFLHDLKEKELSEINVLDMPLDACQAFLSYIYGNIQNEDFLIHRLALLQAAEKYDIADLKEACHLSLLDDIDTKNVLERLQNAYLYQLPELKASCMRYLVKFGKIFEIRDEFNIFMQCADRDLISEIFHEVLSTWKGF.

Residues 164 to 231 form the BTB domain; sequence TDITINASDG…IYGNIQNEDF (68 aa).

It functions in the pathway protein modification; protein ubiquitination. Functionally, may act as a substrate-specific adapter of an E3 ubiquitin-protein ligase complex (CUL3-RBX1-BTB) which mediates the ubiquitination and subsequent proteasomal degradation of target proteins. In Arabidopsis thaliana (Mouse-ear cress), this protein is BTB/POZ domain-containing protein At1g55760.